The sequence spans 519 residues: Acetylcholine receptor subunit gamma (519 aa).

An N-terminal signal peptide occupies residues methionine 1 to serine 22. Over arginine 23 to lysine 240 the chain is Extracellular. Residues asparagine 52 and asparagine 163 are each glycosylated (N-linked (GlcNAc...) asparagine). An intrachain disulfide couples cysteine 150 to cysteine 164. 3 consecutive transmembrane segments (helical) span residues proline 241–leucine 265, cysteine 274–alanine 292, and tyrosine 308–valine 329. The Cytoplasmic portion of the chain corresponds to serine 330–arginine 476. The helical transmembrane segment at valine 477 to alanine 497 threads the bilayer.

This sequence belongs to the ligand-gated ion channel (TC 1.A.9) family. Acetylcholine receptor (TC 1.A.9.1) subfamily. Gamma/CHRNG sub-subfamily. As to quaternary structure, pentamer of two alpha chains, and one each of the beta, delta, and gamma (in immature muscle) or epsilon (in mature muscle) chains. In terms of tissue distribution, at least in myotubes of skeletal muscle.

The protein localises to the postsynaptic cell membrane. Its subcellular location is the cell membrane. The catalysed reaction is K(+)(in) = K(+)(out). It catalyses the reaction Na(+)(in) = Na(+)(out). After binding acetylcholine, the AChR responds by an extensive change in conformation that affects all subunits and leads to opening of an ion-conducting channel across the plasma membrane. The chain is Acetylcholine receptor subunit gamma (Chrng) from Mus musculus (Mouse).